A 229-amino-acid polypeptide reads, in one-letter code: tRNA (guanosine(18)-2'-O)-methyltransferase (229 aa).

3 residues coordinate S-adenosyl-L-methionine: threonine 96, isoleucine 139, and leucine 148.

The protein belongs to the class IV-like SAM-binding methyltransferase superfamily. RNA methyltransferase TrmH family.

It catalyses the reaction guanosine(18) in tRNA + S-adenosyl-L-methionine = 2'-O-methylguanosine(18) in tRNA + S-adenosyl-L-homocysteine + H(+). Its function is as follows. Catalyzes the 2'-O methylation of guanosine at position 18 in tRNA. The sequence is that of tRNA (guanosine(18)-2'-O)-methyltransferase from Escherichia coli O157:H7.